Consider the following 385-residue polypeptide: 1-deoxy-D-xylulose 5-phosphate reductoisomerase (385 aa).

5 residues coordinate NADPH: T10, G11, S12, I13, and N124. Position 125 (K125) interacts with 1-deoxy-D-xylulose 5-phosphate. E126 lines the NADPH pocket. Mn(2+) is bound at residue D150. The 1-deoxy-D-xylulose 5-phosphate site is built by S151, E152, S176, and H199. Residue E152 participates in Mn(2+) binding. Position 205 (G205) interacts with NADPH. Positions 212, 217, 218, and 221 each coordinate 1-deoxy-D-xylulose 5-phosphate. E221 lines the Mn(2+) pocket.

The protein belongs to the DXR family. Requires Mg(2+) as cofactor. Mn(2+) serves as cofactor.

The catalysed reaction is 2-C-methyl-D-erythritol 4-phosphate + NADP(+) = 1-deoxy-D-xylulose 5-phosphate + NADPH + H(+). Its pathway is isoprenoid biosynthesis; isopentenyl diphosphate biosynthesis via DXP pathway; isopentenyl diphosphate from 1-deoxy-D-xylulose 5-phosphate: step 1/6. Its function is as follows. Catalyzes the NADPH-dependent rearrangement and reduction of 1-deoxy-D-xylulose-5-phosphate (DXP) to 2-C-methyl-D-erythritol 4-phosphate (MEP). The sequence is that of 1-deoxy-D-xylulose 5-phosphate reductoisomerase from Clostridium botulinum (strain Alaska E43 / Type E3).